The primary structure comprises 2449 residues: Nonribisomal peptide synthetase phqB (2449 aa).

An adenylation 1 region spans residues 253-654; sequence IQVHSGPGRL…GRRDTVVKIR (402 aa). In terms of domain architecture, Carrier 1 spans 795-870; sequence LPMTPNEDVL…LRTVAKEARP (76 aa). An O-(pantetheine 4'-phosphoryl)serine modification is found at Ser-815. A condensation 1 region spans residues 913-1337; that stretch reads QDIYPTTPLQ…LISDRDSELL (425 aa). The tract at residues 1357 to 1756 is adenylation 2; that stretch reads EAQVTRNPSK…TFTFLGRTNQ (400 aa). Residues 1915–1993 form the Carrier 2 domain; the sequence is WALSKHIGQL…MVAEMIDRTP (79 aa). At Ser-1952 the chain carries O-(pantetheine 4'-phosphoryl)serine. The interval 2041–2297 is reductase (R) domain; sequence LTGATGFLGT…VAAVDWVASL (257 aa). Residues Thr-2045, Met-2249, and Asn-2259 each coordinate NADPH.

It belongs to the NRP synthetase family.

It participates in alkaloid biosynthesis. Its function is as follows. Nonribisomal peptide synthetase; part of the gene cluster that mediates the biosynthesis of paraherquamide, a fungal indole alkaloid that belongs to a family of natural products containing a characteristic bicyclo[2.2.2]diazaoctane core. The first steps in the biosynthesis of paraherquamide is the production of the beta-methyl-proline precursor from L-isoleucine. They require oxidation of a terminally hydroxylated L-isoleucine to the corresponding aldehyde by enzymes which have still to be identified. Spontaneous cyclization and dehydration would yield the 4-methyl pyrolline-5-carboxylic acid, which is then reduced by the pyrroline-5-carboxylate reductase phqD leading to the beta-methyl-proline precursor. The next step of paraherquamide biosynthesis involves coupling of beta-methyl-proline and L-tryptophan by the bimodular NRPS phqB, to produce a monooxopiperazine intermediate. The reductase (R) domain of phqB utilizes NADPH for hydride transfer to reduce the thioester bond of the T domain-tethered linear dipeptide to a hemithioaminal intermediate, which spontaneously cleaves the C-S bond to release the aldehyde product. This compound undergoes spontaneous cyclization and dehydration to give a dienamine which is reverse prenylated at C-2 by the reverse prenyltransferase phqJ. The other prenyltransferase present in the cluster, phqI may be a redundant gene in the pathway. During biosynthetic assembly, the key step to produce the polycyclic core is catalyzed by the bifunctional reductase and intramolecular [4+2] Diels-Alderase, phqE, resulting in formation of the [2.2.2] diazaoctane intermediate preparaherquamide. Following formation of preparaherquamide, an indole 2,3-epoxidation-initiated pinacol-like rearrangement is catalyzed by the phqK FAD-dependent monooxygenase. The prenyltransferase phqA, the cytochrome P450 monooxygenase phqL, and the FAD-linked oxidoreductase phqH (or the cytochrome P450 monooxygenase phqM), are proposed to be involved in the formation of the pyran ring. The FAD-dependent monooxygenase phqK is likely responsible for generation of the spiro-oxindole, and the N-methylation is likely mediated by the phqN methyltransferase leading to the isolable natural product paraherquamide F. However, the order of these biosynthetic steps has still to be determined. In late-stage paraherquamide biosynthesis, the third P450 monooxygenase, phqO, is probably responsible for the C-14 hydroxylation, transforming paraherquamide F to paraherquamide G, and paraherquamide E to the final product paraherquamide A. The expansion from the 6-membered ring pyran (in paraherquamides F and G) to the 7-membered dioxepin ring (in paraherquamides A and E) represents a poorly understood but intriguing process that probably involves the 2-oxoglutarate-dependent dioxygenase phqC. Finally, the remaining members of the paraherquamide cluster, including phqI as well as phqM (or phqH), do not have a clearly prescribed role and appear to be redundant. In Penicillium fellutanum, this protein is Nonribisomal peptide synthetase phqB.